A 161-amino-acid chain; its full sequence is Afimbrial adhesin AFA-I (161 aa).

Positions 1–21 (MKKLAIIGATSVMMMTGTAQA) are cleaved as a signal peptide.

Belongs to the Dr-adhesin family.

The protein localises to the fimbrium. Hemagglutinins of uropathogenic E.coli mediate adherence to the upper urinary tract. These adhesins bind to the Dr blood group antigen and also agglutinate human erythrocytes in the presence of D-mannose (mannose-resistant hemagglutination (MRHA)). This Escherichia coli protein is Afimbrial adhesin AFA-I (afaE1).